The chain runs to 270 residues: 4-hydroxy-tetrahydrodipicolinate reductase (270 aa).

Residues 8 to 13 (GALGRM), Asp34, 102 to 104 (GTT), and 128 to 131 (SQNY) contribute to the NAD(+) site. The active-site Proton donor/acceptor is His160. Residue His161 participates in (S)-2,3,4,5-tetrahydrodipicolinate binding. Lys164 functions as the Proton donor in the catalytic mechanism. (S)-2,3,4,5-tetrahydrodipicolinate is bound at residue 170–171 (GT).

Belongs to the DapB family.

Its subcellular location is the cytoplasm. The catalysed reaction is (S)-2,3,4,5-tetrahydrodipicolinate + NAD(+) + H2O = (2S,4S)-4-hydroxy-2,3,4,5-tetrahydrodipicolinate + NADH + H(+). It carries out the reaction (S)-2,3,4,5-tetrahydrodipicolinate + NADP(+) + H2O = (2S,4S)-4-hydroxy-2,3,4,5-tetrahydrodipicolinate + NADPH + H(+). The protein operates within amino-acid biosynthesis; L-lysine biosynthesis via DAP pathway; (S)-tetrahydrodipicolinate from L-aspartate: step 4/4. Catalyzes the conversion of 4-hydroxy-tetrahydrodipicolinate (HTPA) to tetrahydrodipicolinate. This chain is 4-hydroxy-tetrahydrodipicolinate reductase, found in Methanococcus maripaludis (strain C5 / ATCC BAA-1333).